A 118-amino-acid chain; its full sequence is UPF0102 protein PC1_0307 (118 aa).

Belongs to the UPF0102 family.

This is UPF0102 protein PC1_0307 from Pectobacterium carotovorum subsp. carotovorum (strain PC1).